The chain runs to 383 residues: UDP-N-acetylglucosamine--N-acetylmuramyl-(pentapeptide) pyrophosphoryl-undecaprenol N-acetylglucosamine transferase (383 aa).

UDP-N-acetyl-alpha-D-glucosamine contacts are provided by residues 10–12 (TGG), N124, R165, S190, I245, and Q290. The segment at 364-383 (PFGQAREPGQKPARPPDLAS) is disordered.

It belongs to the glycosyltransferase 28 family. MurG subfamily.

It localises to the cell inner membrane. It carries out the reaction di-trans,octa-cis-undecaprenyl diphospho-N-acetyl-alpha-D-muramoyl-L-alanyl-D-glutamyl-meso-2,6-diaminopimeloyl-D-alanyl-D-alanine + UDP-N-acetyl-alpha-D-glucosamine = di-trans,octa-cis-undecaprenyl diphospho-[N-acetyl-alpha-D-glucosaminyl-(1-&gt;4)]-N-acetyl-alpha-D-muramoyl-L-alanyl-D-glutamyl-meso-2,6-diaminopimeloyl-D-alanyl-D-alanine + UDP + H(+). The protein operates within cell wall biogenesis; peptidoglycan biosynthesis. Its function is as follows. Cell wall formation. Catalyzes the transfer of a GlcNAc subunit on undecaprenyl-pyrophosphoryl-MurNAc-pentapeptide (lipid intermediate I) to form undecaprenyl-pyrophosphoryl-MurNAc-(pentapeptide)GlcNAc (lipid intermediate II). The protein is UDP-N-acetylglucosamine--N-acetylmuramyl-(pentapeptide) pyrophosphoryl-undecaprenol N-acetylglucosamine transferase of Anaeromyxobacter sp. (strain K).